Consider the following 1173-residue polypeptide: SMC5-SMC6 complex localization factor protein 2 (1173 aa).

The interval 1 to 109 (MTRRCMPARP…KPKRVPPEKS (109 aa)) is disordered. Composition is skewed to basic and acidic residues over residues 39–50 (KRTESPGDRKQS) and 88–106 (QFER…RVPP). Residues 137–149 (SLASKYLAKGTNI) carry the APIM motif motif. 5 disordered regions span residues 161–230 (MKSL…PEES), 256–275 (QMEQ…SLSL), 280–373 (ERKY…QKEK), 394–620 (KEPS…EEET), and 635–663 (TPAA…VHPG). The segment covering 181–199 (ENNEKNDRDRGKTNADSKK) has biased composition (basic and acidic residues). Low complexity-rich tracts occupy residues 212-221 (SSRSLSSRSS) and 262-275 (NSEN…SLSL). The segment covering 280-293 (ERKYKPRQEQRKQN) has biased composition (basic and acidic residues). The span at 317-330 (SDSWEPTSAGSKQN) shows a compositional bias: polar residues. Basic and acidic residues-rich tracts occupy residues 339–349 (NSVDSDLKSTR) and 355–373 (KARE…QKEK). Polar residues predominate over residues 409 to 428 (PSNSGNSGHHSTRNSDQIQV). Ser481 is subject to Phosphoserine. The segment covering 499-520 (SKKDKERSSSKECSGHSTESTK) has biased composition (basic and acidic residues). A compositionally biased stretch (low complexity) spans 571-592 (APSDKAPSEGESSGNSNAGSSA). The segment covering 602-619 (DSDEESLGYNLDSDEEEE) has biased composition (acidic residues). Phosphoserine occurs at positions 603, 607, and 614. An interaction with SIMC1 region spans residues 635-1173 (TPAATGKPPA…QLHDFWVPDS (539 aa)). The tract at residues 664–1166 (TYTNTLERLV…NCRPTQGQLH (503 aa)) is NSE6-like domain. The interval 702–1173 (PIRIGEEDST…QLHDFWVPDS (472 aa)) is required for interaction with SLF1 and RAD18.

The protein belongs to the FAM178 family. Forms a heterodimer with SIMC1. Interacts with SLF1 (via N-terminus); this interaction links RAD18 to the SMC5-SMC6 complex. Interacts with RAD18; this interaction is increased in a SLF1-dependent manner. Interacts with SMC5 and SMC6. In terms of tissue distribution, widely expressed. Expressed at higher level in skeletal muscle and at slightly lower level in brain, liver and heart, than in lung, kidney, spleen and thymus.

The protein localises to the nucleus. It is found in the PML body. Its function is as follows. Plays a role in the DNA damage response (DDR) pathway by regulating postreplication repair of UV-damaged DNA and genomic stability maintenance. The SLF1-SLF2 complex acts to link RAD18 with the SMC5-SMC6 complex at replication-coupled interstrand cross-links (ICL) and DNA double-strand breaks (DSBs) sites on chromatin during DNA repair in response to stalled replication forks. Promotes the recruitment of the SMC5-SMC6 complex to DNA lesions. Plays a role in SMC5-SMC6 complex recruitment for viral restriction. Forms a complex with SIMC1 and this complex is required to recruit SMC5-SMC6 complex to PML nuclear bodies and sites of viral replication. This Homo sapiens (Human) protein is SMC5-SMC6 complex localization factor protein 2.